Consider the following 146-residue polypeptide: MIALIQRVSEARVVVDGAVTGEISNGLLVLLGVERDDDVAKADKLAHRVAGYRVFSDADGKMNLNVQQVNGSILVVSQFTLAADTRKGMRASFAERNADPAVAEALYEHFIAQIAGKEIPVASGRFAADMQVSLVNDGPVTFWLQV.

The Gly-cisPro motif, important for rejection of L-amino acids signature appears at 138–139 (GP).

The protein belongs to the DTD family. As to quaternary structure, homodimer.

The protein resides in the cytoplasm. The enzyme catalyses glycyl-tRNA(Ala) + H2O = tRNA(Ala) + glycine + H(+). The catalysed reaction is a D-aminoacyl-tRNA + H2O = a tRNA + a D-alpha-amino acid + H(+). Its function is as follows. An aminoacyl-tRNA editing enzyme that deacylates mischarged D-aminoacyl-tRNAs. Also deacylates mischarged glycyl-tRNA(Ala), protecting cells against glycine mischarging by AlaRS. Acts via tRNA-based rather than protein-based catalysis; rejects L-amino acids rather than detecting D-amino acids in the active site. By recycling D-aminoacyl-tRNA to D-amino acids and free tRNA molecules, this enzyme counteracts the toxicity associated with the formation of D-aminoacyl-tRNA entities in vivo and helps enforce protein L-homochirality. This is D-aminoacyl-tRNA deacylase from Tolumonas auensis (strain DSM 9187 / NBRC 110442 / TA 4).